The primary structure comprises 334 residues: GTP 3',8-cyclase (334 aa).

One can recognise a Radical SAM core domain in the interval 13–239 (RFQRKFYYLR…KARADNDGPA (227 aa)). Arg22 contacts GTP. Positions 29 and 33 each coordinate [4Fe-4S] cluster. Tyr35 serves as a coordination point for S-adenosyl-L-methionine. Cys36 lines the [4Fe-4S] cluster pocket. Arg73 lines the GTP pocket. Gly77 provides a ligand contact to S-adenosyl-L-methionine. Thr104 serves as a coordination point for GTP. Residue Ser128 participates in S-adenosyl-L-methionine binding. Lys165 is a GTP binding site. Met199 serves as a coordination point for S-adenosyl-L-methionine. Residues Cys262 and Cys265 each contribute to the [4Fe-4S] cluster site. 267 to 269 (RLR) lines the GTP pocket. A [4Fe-4S] cluster-binding site is contributed by Cys279.

Belongs to the radical SAM superfamily. MoaA family. As to quaternary structure, monomer and homodimer. It depends on [4Fe-4S] cluster as a cofactor.

It catalyses the reaction GTP + AH2 + S-adenosyl-L-methionine = (8S)-3',8-cyclo-7,8-dihydroguanosine 5'-triphosphate + 5'-deoxyadenosine + L-methionine + A + H(+). The protein operates within cofactor biosynthesis; molybdopterin biosynthesis. Catalyzes the cyclization of GTP to (8S)-3',8-cyclo-7,8-dihydroguanosine 5'-triphosphate. In Vibrio cholerae serotype O1 (strain M66-2), this protein is GTP 3',8-cyclase.